The primary structure comprises 241 residues: Triosephosphate isomerase (241 aa).

Asn-9–Lys-11 is a binding site for substrate. Residue His-96 is the Electrophile of the active site. Residue Glu-165 is the Proton acceptor of the active site. Substrate-binding positions include Gly-171, Ser-204, and Gly-225–Gly-226.

The protein belongs to the triosephosphate isomerase family. In terms of assembly, homodimer.

It localises to the cytoplasm. The catalysed reaction is D-glyceraldehyde 3-phosphate = dihydroxyacetone phosphate. The protein operates within carbohydrate biosynthesis; gluconeogenesis. Its pathway is carbohydrate degradation; glycolysis; D-glyceraldehyde 3-phosphate from glycerone phosphate: step 1/1. In terms of biological role, involved in the gluconeogenesis. Catalyzes stereospecifically the conversion of dihydroxyacetone phosphate (DHAP) to D-glyceraldehyde-3-phosphate (G3P). The polypeptide is Triosephosphate isomerase (Trichormus variabilis (strain ATCC 29413 / PCC 7937) (Anabaena variabilis)).